We begin with the raw amino-acid sequence, 132 residues long: Small ribosomal subunit protein eS24 (132 aa).

Positions 90–100 (RLARHGLFEKK) are enriched in basic and acidic residues. Residues 90–132 (RLARHGLFEKKKTSRKQRKERKNRMKKVRGTKKASVGASKKKD) are disordered. The segment covering 101 to 121 (KTSRKQRKERKNRMKKVRGTK) has biased composition (basic residues).

This sequence belongs to the eukaryotic ribosomal protein eS24 family. As to quaternary structure, component of the small ribosomal subunit.

It localises to the cytoplasm. In terms of biological role, component of the small ribosomal subunit. The ribosome is a large ribonucleoprotein complex responsible for the synthesis of proteins in the cell. Required for processing of pre-rRNA and maturation of 40S ribosomal subunits. This is Small ribosomal subunit protein eS24 (rps24) from Takifugu rubripes (Japanese pufferfish).